Here is a 208-residue protein sequence, read N- to C-terminus: MTDSNNQSPNKKTSGSSGAPTAADGRQENRRSRGEKRGGRRDRRGQERDSEWQERVVQIRRVSKTVKGGKKMSFRAIVVVGNEKGQVGVGVGKAGDVIGAVRKGVADGKKHLVRVPLTRNSSIPTLSNGRDGAASVLIRPAAPGTGVIAGGSIRTVLELAGIKNVLAKRLGSKTPLNNARAAMVALSELRTHKATAKERGISLEQIYS.

Polar residues predominate over residues 1–19 (MTDSNNQSPNKKTSGSSGA). The interval 1 to 54 (MTDSNNQSPNKKTSGSSGAPTAADGRQENRRSRGEKRGGRRDRRGQERDSEWQE) is disordered. Basic and acidic residues-rich tracts occupy residues 25–37 (GRQE…GEKR) and 44–54 (RGQERDSEWQE). The S5 DRBM domain maps to 52–115 (WQERVVQIRR…ADGKKHLVRV (64 aa)).

It belongs to the universal ribosomal protein uS5 family. As to quaternary structure, part of the 30S ribosomal subunit. Contacts proteins S4 and S8.

In terms of biological role, with S4 and S12 plays an important role in translational accuracy. Located at the back of the 30S subunit body where it stabilizes the conformation of the head with respect to the body. The polypeptide is Small ribosomal subunit protein uS5 (Prochlorococcus marinus (strain NATL1A)).